Reading from the N-terminus, the 156-residue chain is Phosphopantetheine adenylyltransferase (156 aa).

Belongs to the eukaryotic CoaD family.

Its subcellular location is the cytoplasm. The enzyme catalyses (R)-4'-phosphopantetheine + ATP + H(+) = 3'-dephospho-CoA + diphosphate. The protein operates within cofactor biosynthesis; coenzyme A biosynthesis. Reversibly transfers an adenylyl group from ATP to 4'-phosphopantetheine, yielding dephospho-CoA (dPCoA) and pyrophosphate. This is Phosphopantetheine adenylyltransferase from Methanosarcina acetivorans (strain ATCC 35395 / DSM 2834 / JCM 12185 / C2A).